Consider the following 306-residue polypeptide: Phospho-N-acetylmuramoyl-pentapeptide-transferase (306 aa).

The next 10 helical transmembrane spans lie at 1–21 (MDIY…IIFP), 49–69 (GTPT…GLIL), 75–95 (LIFT…VSIV), 104–124 (AWQK…TILQ), 130–150 (IFGI…LVSG), 160–180 (GIDG…MFFS), 182–202 (SSME…FLVY), 209–229 (VFMG…YALM), 234–254 (LSLL…ILQV), and 284–304 (IVGV…AFFL).

This sequence belongs to the glycosyltransferase 4 family. MraY subfamily. It depends on Mg(2+) as a cofactor.

The protein localises to the cell inner membrane. It carries out the reaction UDP-N-acetyl-alpha-D-muramoyl-L-alanyl-gamma-D-glutamyl-meso-2,6-diaminopimeloyl-D-alanyl-D-alanine + di-trans,octa-cis-undecaprenyl phosphate = di-trans,octa-cis-undecaprenyl diphospho-N-acetyl-alpha-D-muramoyl-L-alanyl-D-glutamyl-meso-2,6-diaminopimeloyl-D-alanyl-D-alanine + UMP. It functions in the pathway cell wall biogenesis; peptidoglycan biosynthesis. In terms of biological role, catalyzes the initial step of the lipid cycle reactions in the biosynthesis of the cell wall peptidoglycan: transfers peptidoglycan precursor phospho-MurNAc-pentapeptide from UDP-MurNAc-pentapeptide onto the lipid carrier undecaprenyl phosphate, yielding undecaprenyl-pyrophosphoryl-MurNAc-pentapeptide, known as lipid I. This is Phospho-N-acetylmuramoyl-pentapeptide-transferase from Fervidobacterium nodosum (strain ATCC 35602 / DSM 5306 / Rt17-B1).